The following is a 203-amino-acid chain: Putative phosphoserine phosphatase 2 (203 aa).

Catalysis depends on His9, which acts as the Tele-phosphohistidine intermediate. The active site involves His149.

The protein belongs to the histidine phosphatase superfamily. Metal-independent phosphoserine phosphatase family. As to quaternary structure, heterodimer with PspA. The PspB subunit appears to have no or considerably lower PSP activity compared with that of PspA.

The enzyme catalyses O-phospho-L-serine + H2O = L-serine + phosphate. It catalyses the reaction O-phospho-D-serine + H2O = D-serine + phosphate. Its pathway is amino-acid biosynthesis; L-serine biosynthesis; L-serine from 3-phospho-D-glycerate: step 3/3. Its activity is regulated as follows. Activity is not inhibited by EDTA in vitro, nor enhanced by the addition of Mg(2+). In terms of biological role, part of a complex that catalyzes the dephosphorylation of L-phosphoserine to serine and inorganic phosphate. Is poorly or not active toward D-phosphoserine, DL-phosphothreonine, 3-phosphoglycerate, para-nitrophenylphosphate, and fructose-6-phosphate. Does not display phosphoglycerate mutase activity. The polypeptide is Putative phosphoserine phosphatase 2 (pspB) (Hydrogenobacter thermophilus (strain DSM 6534 / IAM 12695 / TK-6)).